Consider the following 122-residue polypeptide: Small ribosomal subunit protein uS13 (122 aa).

The tract at residues 95–122 (QLPVRGQRTHTNARTRKGKAKPIAGKKK) is disordered.

This sequence belongs to the universal ribosomal protein uS13 family. Part of the 30S ribosomal subunit. Forms a loose heterodimer with protein S19. Forms two bridges to the 50S subunit in the 70S ribosome.

Located at the top of the head of the 30S subunit, it contacts several helices of the 16S rRNA. In the 70S ribosome it contacts the 23S rRNA (bridge B1a) and protein L5 of the 50S subunit (bridge B1b), connecting the 2 subunits; these bridges are implicated in subunit movement. Contacts the tRNAs in the A and P-sites. The polypeptide is Small ribosomal subunit protein uS13 (Beijerinckia indica subsp. indica (strain ATCC 9039 / DSM 1715 / NCIMB 8712)).